The sequence spans 174 residues: RNA pyrophosphohydrolase (174 aa).

The region spanning 6–149 (GFRANVGIII…KRDVYRKVMK (144 aa)) is the Nudix hydrolase domain. The Nudix box motif lies at 38–59 (GGVDDGETAEEAMYRELYEEVG).

The protein belongs to the Nudix hydrolase family. RppH subfamily. A divalent metal cation serves as cofactor.

Functionally, accelerates the degradation of transcripts by removing pyrophosphate from the 5'-end of triphosphorylated RNA, leading to a more labile monophosphorylated state that can stimulate subsequent ribonuclease cleavage. The chain is RNA pyrophosphohydrolase from Shewanella sp. (strain MR-7).